Consider the following 571-residue polypeptide: Kinesin light chain (571 aa).

A coiled-coil region spans residues 54–160 (LLTSMKTIRK…KKHLEFMNEM (107 aa)). Positions 167–177 (EAQVNEEKESE) are enriched in basic and acidic residues. Residues 167-210 (EAQVNEEKESEQSSLDLGFPDDDDDGGQPEVLSPTQPSAMAQAA) form a disordered region. TPR repeat units follow at residues 220–253 (LRTL…LEKT), 262–295 (ATML…REKT), 304–337 (AATL…REKV), 346–379 (AKQL…YQKE), 388–421 (AKTK…AHEK), and 471–504 (TTTL…RKSA). The segment at 518–571 (GSDFSKGQSPKDRKRSNSRDRNRRDSMDSVSYEKSGDGDEHEKSKLHVGTSHKQ) is disordered. Composition is skewed to basic and acidic residues over residues 526-544 (SPKD…RDSM) and 551-562 (KSGDGDEHEKSK).

It belongs to the kinesin light chain family. Oligomeric complex composed of two heavy chains and two light chains.

Its subcellular location is the cytoplasm. The protein resides in the cytoskeleton. In terms of biological role, kinesin is a microtubule-associated force-producing protein that may play a role in organelle transport. The light chain may function in coupling of cargo to the heavy chain or in the modulation of its ATPase activity. The sequence is that of Kinesin light chain from Doryteuthis pealeii (Longfin inshore squid).